We begin with the raw amino-acid sequence, 620 residues long: Glutathione-regulated potassium-efflux system protein KefC (620 aa).

A run of 12 helical transmembrane segments spans residues 4–24 (HTLI…PIAV), 26–46 (LGLG…PWGL), 54–74 (SILH…GLEL), 90–110 (GALQ…LLGL), 114–134 (VAEL…MQAM), 149–169 (FAVL…IPLL), 178–198 (MGAF…VVLL), 218–238 (VFSA…EEVG), 270–290 (GLLL…GTLL), 294–314 (LRIV…LWLI), 327–347 (WFAV…GAAQ), and 359–379 (SLTL…VILN). The 120-residue stretch at 399–518 (QPRVIIAGFG…AGVEKPERET (120 aa)) folds into the RCK N-terminal domain. The disordered stretch occupies residues 597 to 620 (GWQGTEEGKHTGNMADEPETKPSS).

This sequence belongs to the monovalent cation:proton antiporter 2 (CPA2) transporter (TC 2.A.37) family. KefC subfamily. In terms of assembly, homodimer. Interacts with the regulatory subunit KefF.

The protein localises to the cell inner membrane. Functionally, pore-forming subunit of a potassium efflux system that confers protection against electrophiles. Catalyzes K(+)/H(+) antiport. The protein is Glutathione-regulated potassium-efflux system protein KefC of Escherichia coli O7:K1 (strain IAI39 / ExPEC).